We begin with the raw amino-acid sequence, 590 residues long: Protein O-linked-mannose beta-1,4-N-acetylglucosaminyltransferase 2 (590 aa).

Topologically, residues 1–4 (MSVG) are cytoplasmic. A helical; Signal-anchor for type II membrane protein membrane pass occupies residues 5–25 (TLLNGLLVSIVAALLWKYSKL). Topologically, residues 26-590 (SEHAALLEEE…PFADVLMCRT (565 aa)) are lumenal. Residues N98, N275, and N553 are each glycosylated (N-linked (GlcNAc...) asparagine). A Fibronectin type-III domain is found at 494-590 (RVRDPQCQTS…PFADVLMCRT (97 aa)).

This sequence belongs to the glycosyltransferase 61 family.

The protein localises to the endoplasmic reticulum membrane. The catalysed reaction is 3-O-(alpha-D-mannosyl)-L-threonyl-[protein] + UDP-N-acetyl-alpha-D-glucosamine = 3-O-(N-acetyl-beta-D-glucosaminyl-(1-&gt;4)-alpha-D-mannosyl)-L-threonyl-[protein] + UDP + H(+). It functions in the pathway protein modification; protein glycosylation. Functionally, O-linked mannose beta-1,4-N-acetylglucosaminyltransferase that transfers UDP-N-acetyl-D-glucosamine to the 4-position of the mannose to generate N-acetyl-D-glucosamine-beta-1,4-O-D-mannosylprotein. Involved in the biosynthesis of the phosphorylated O-mannosyl trisaccharide (N-acetylgalactosamine-beta-3-N-acetylglucosamine-beta-4-(phosphate-6-)mannose), a carbohydrate structure present in alpha-dystroglycan (DAG1), which is required for binding laminin G-like domain-containing extracellular proteins with high affinity. The sequence is that of Protein O-linked-mannose beta-1,4-N-acetylglucosaminyltransferase 2 (pomgnt2) from Takifugu rubripes (Japanese pufferfish).